A 512-amino-acid chain; its full sequence is 2-isopropylmalate synthase (512 aa).

Residues 5 to 267 (VVIFDTTLRD…ETSINKSEIY (263 aa)) form the Pyruvate carboxyltransferase domain. The Mn(2+) site is built by Asp14, His202, His204, and Asn238. The segment at 391-512 (SLEYLHITSG…LPKAKTERAV (122 aa)) is regulatory domain.

The protein belongs to the alpha-IPM synthase/homocitrate synthase family. LeuA type 1 subfamily. Homodimer. It depends on Mn(2+) as a cofactor.

Its subcellular location is the cytoplasm. The catalysed reaction is 3-methyl-2-oxobutanoate + acetyl-CoA + H2O = (2S)-2-isopropylmalate + CoA + H(+). The protein operates within amino-acid biosynthesis; L-leucine biosynthesis; L-leucine from 3-methyl-2-oxobutanoate: step 1/4. In terms of biological role, catalyzes the condensation of the acetyl group of acetyl-CoA with 3-methyl-2-oxobutanoate (2-ketoisovalerate) to form 3-carboxy-3-hydroxy-4-methylpentanoate (2-isopropylmalate). The chain is 2-isopropylmalate synthase from Heliobacterium modesticaldum (strain ATCC 51547 / Ice1).